Reading from the N-terminus, the 189-residue chain is Xanthine phosphoribosyltransferase (189 aa).

Positions 20 and 27 each coordinate xanthine. 127–131 (AYGNA) contributes to the 5-phospho-alpha-D-ribose 1-diphosphate binding site. A xanthine-binding site is contributed by lysine 155.

This sequence belongs to the purine/pyrimidine phosphoribosyltransferase family. Xpt subfamily. As to quaternary structure, homodimer.

The protein resides in the cytoplasm. It carries out the reaction XMP + diphosphate = xanthine + 5-phospho-alpha-D-ribose 1-diphosphate. It functions in the pathway purine metabolism; XMP biosynthesis via salvage pathway; XMP from xanthine: step 1/1. Its function is as follows. Converts the preformed base xanthine, a product of nucleic acid breakdown, to xanthosine 5'-monophosphate (XMP), so it can be reused for RNA or DNA synthesis. This Bacteroides fragilis (strain ATCC 25285 / DSM 2151 / CCUG 4856 / JCM 11019 / LMG 10263 / NCTC 9343 / Onslow / VPI 2553 / EN-2) protein is Xanthine phosphoribosyltransferase.